Here is a 710-residue protein sequence, read N- to C-terminus: Denticleless protein homolog A (710 aa).

WD repeat units follow at residues 47-89 (GMPV…MQRL), 96-135 (AHTN…LIGE), and 138-178 (GHQC…KDGF). The DDB1-binding motif motif lies at 168–171 (WDTR). A Nuclear localization signal motif is present at residues 197–204 (PSKMKKRK). 4 WD repeats span residues 215 to 254 (DSQQ…SAYR), 270 to 309 (TRKL…TDPV), 314 to 355 (GHQN…AAPV), and 359 to 398 (GHCQ…CEDS). The short motif at 244–247 (WDLR) is the DDB1-binding motif element. Disordered regions lie at residues 428 to 534 (GKPS…VSSA) and 652 to 698 (ALGH…PGSM). Residues 430-450 (PSVMSSSSLTSSPTPASCAPS) are compositionally biased toward low complexity. 2 stretches are compositionally biased toward polar residues: residues 504–516 (TPKS…TKTP) and 659–690 (SSPQ…SPVS).

It belongs to the WD repeat cdt2 family. In terms of assembly, component of the DCX(DTL) E3 ubiquitin ligase complex, at least composed of cul4 (cul4a or cul4b), ddb1, dtl/cdt2 and rbx1.

It localises to the nucleus. The protein localises to the cytoplasm. It is found in the cytoskeleton. Its subcellular location is the microtubule organizing center. The protein resides in the centrosome. It localises to the chromosome. Its pathway is protein modification; protein ubiquitination. Its function is as follows. Substrate-specific adapter of a DCX (DDB1-CUL4-X-box) E3 ubiquitin-protein ligase complex required for cell cycle control, DNA damage response and translesion DNA synthesis. The DCX(DTL) complex, also named CRL4(CDT2) complex, mediates the polyubiquitination and subsequent degradation of CDT1, CDKN1A/p21(CIP1), KMT5A and SDE2. CDT1 degradation in response to DNA damage is necessary to ensure proper cell cycle regulation of DNA replication. CDKN1A/p21(CIP1) degradation during S phase or following UV irradiation is essential to control replication licensing. KMT5A degradation is also important for a proper regulation of mechanisms such as TGF-beta signaling, cell cycle progression, DNA repair and cell migration. Most substrates require their interaction with PCNA for their polyubiquitination: substrates interact with PCNA via their PIP-box, and those containing the 'K+4' motif in the PIP box, recruit the DCX(DTL) complex, leading to their degradation. In undamaged proliferating cells, the DCX(DTL) complex also promotes the 'Lys-164' monoubiquitination of PCNA, thereby being involved in PCNA-dependent translesion DNA synthesis. May play a role in the regulation of the circadian clock. The protein is Denticleless protein homolog A (dtl-a) of Xenopus laevis (African clawed frog).